A 315-amino-acid polypeptide reads, in one-letter code: MPLKLRGKKKAKSKETAGLVEGEPTGAGGGSLSASRAPARRLVFHAQLAHGSATGRVEGFSSIQELYAQIAGAFEISPSEILYCTLNTPKIDMERLLGGQLGLEDFIFAHVKGIEKEVNVYKSEDSLGLTITDNGVGYAFIKRIKDGGVIDSVKTICVGDHIESINGENIVGWRHYDVAKKLKELKKEELFTMKLIEPKKAFEIELRSKAGKSSGEKIGCGRATLRLRSKGPATVEEMPSETKAKAIEKIDDVLELYMGIRDIDLATTMFEAGKDKVNPDEFAVALDETLGDFAFPDEFVFDVWGVIGDAKRRGL.

Positions 1 to 12 (MPLKLRGKKKAK) are enriched in basic residues. The disordered stretch occupies residues 1–34 (MPLKLRGKKKAKSKETAGLVEGEPTGAGGGSLSA). The 81-residue stretch at 117 to 197 (EVNVYKSEDS…EELFTMKLIE (81 aa)) folds into the PDZ domain.

The protein belongs to the GIPC family. Probably interacts with SEMA5A. As to expression, expressed at highest levels in ascending colon and at moderate levels in adult kidney. Expressed at low levels in adult pancreas and at very low levels in adult liver. Expression is down-regulated in several primary tumors, such as kidney, colon and rectal tumors.

The protein resides in the cytoplasm. The polypeptide is PDZ domain-containing protein GIPC2 (GIPC2) (Homo sapiens (Human)).